Consider the following 400-residue polypeptide: tRNA(Met) cytidine acetate ligase (400 aa).

ATP-binding positions include 7-20 (IVEYNPFHNGHQYH), glycine 101, asparagine 162, and arginine 187.

Belongs to the TmcAL family.

The protein resides in the cytoplasm. It carries out the reaction cytidine(34) in elongator tRNA(Met) + acetate + ATP = N(4)-acetylcytidine(34) in elongator tRNA(Met) + AMP + diphosphate. In terms of biological role, catalyzes the formation of N(4)-acetylcytidine (ac(4)C) at the wobble position of elongator tRNA(Met), using acetate and ATP as substrates. First activates an acetate ion to form acetyladenylate (Ac-AMP) and then transfers the acetyl group to tRNA to form ac(4)C34. This is tRNA(Met) cytidine acetate ligase from Oceanobacillus iheyensis (strain DSM 14371 / CIP 107618 / JCM 11309 / KCTC 3954 / HTE831).